A 271-amino-acid chain; its full sequence is Shikimate dehydrogenase (NADP(+)) (271 aa).

Residues 14 to 16 (SKS) and Thr61 each bind shikimate. Lys65 acts as the Proton acceptor in catalysis. Shikimate is bound by residues Asn86 and Asp102. NADP(+) is bound by residues 126-130 (GAGGA), 149-154 (NRTFSR), and Met213. Tyr215 is a binding site for shikimate. Gly238 provides a ligand contact to NADP(+).

Belongs to the shikimate dehydrogenase family. Homodimer.

The catalysed reaction is shikimate + NADP(+) = 3-dehydroshikimate + NADPH + H(+). The protein operates within metabolic intermediate biosynthesis; chorismate biosynthesis; chorismate from D-erythrose 4-phosphate and phosphoenolpyruvate: step 4/7. Involved in the biosynthesis of the chorismate, which leads to the biosynthesis of aromatic amino acids. Catalyzes the reversible NADPH linked reduction of 3-dehydroshikimate (DHSA) to yield shikimate (SA). The chain is Shikimate dehydrogenase (NADP(+)) from Histophilus somni (strain 2336) (Haemophilus somnus).